The sequence spans 398 residues: UPF0229 protein Ccel_0490 (398 aa).

Disordered regions lie at residues 1–22 and 68–104; these read MAIFRDCSNIGKDRSAEDRRRH and KSKPGVGAGDGNEKRGDKFPGDSQEGKGKGNAGNSEG. Composition is skewed to basic and acidic residues over residues 11–22 and 78–95; these read GKDRSAEDRRRH and GNEKRGDKFPGDSQEGKG.

It belongs to the UPF0229 family.

The chain is UPF0229 protein Ccel_0490 from Ruminiclostridium cellulolyticum (strain ATCC 35319 / DSM 5812 / JCM 6584 / H10) (Clostridium cellulolyticum).